The following is a 306-amino-acid chain: ADP,ATP carrier protein ER-ANT1 (306 aa).

3 Solcar repeats span residues Glu-8–Leu-101, Lys-113–Ile-205, and Gly-213–Ile-299. The next 5 helical transmembrane spans lie at Phe-10–Leu-37, Gln-78–Leu-102, Tyr-111–Leu-131, Phe-181–Ile-202, and Leu-216–Phe-236. 2 residues coordinate ADP: Arg-83 and Lys-95. Arg-240 provides a ligand contact to ADP. Residues Arg-240–Leu-245 are important for transport activity. Positions Arg-240–Leu-245 match the Nucleotide carrier signature motif motif. A helical membrane pass occupies residues Val-276–Leu-296.

The protein belongs to the mitochondrial carrier (TC 2.A.29) family.

The protein localises to the endoplasmic reticulum membrane. The catalysed reaction is ADP(in) + ATP(out) = ADP(out) + ATP(in). Its function is as follows. ADP:ATP antiporter that catalyzes the exchange of ADP and ATP across the endoplasmic reticulum membrane. The chain is ADP,ATP carrier protein ER-ANT1 (ER-ANT1) from Arabidopsis thaliana (Mouse-ear cress).